Consider the following 85-residue polypeptide: Translation initiation factor IF-1 1 (85 aa).

In terms of domain architecture, S1-like spans 1-72 (MSKEDLIEMQ…NKGRLTFRHI (72 aa)).

This sequence belongs to the IF-1 family. Component of the 30S ribosomal translation pre-initiation complex which assembles on the 30S ribosome in the order IF-2 and IF-3, IF-1 and N-formylmethionyl-tRNA(fMet); mRNA recruitment can occur at any time during PIC assembly.

The protein localises to the cytoplasm. Its function is as follows. One of the essential components for the initiation of protein synthesis. Stabilizes the binding of IF-2 and IF-3 on the 30S subunit to which N-formylmethionyl-tRNA(fMet) subsequently binds. Helps modulate mRNA selection, yielding the 30S pre-initiation complex (PIC). Upon addition of the 50S ribosomal subunit IF-1, IF-2 and IF-3 are released leaving the mature 70S translation initiation complex. The protein is Translation initiation factor IF-1 1 of Paracidovorax citrulli (strain AAC00-1) (Acidovorax citrulli).